A 632-amino-acid chain; its full sequence is Chaperone protein HtpG (632 aa).

Residues 1 to 339 (MAHETMSFQA…SADLPLNVSR (339 aa)) form an a; substrate-binding region. The interval 340–559 (EILQESRDVK…DNDMSGYLQR (220 aa)) is b. The c stretch occupies residues 560 to 632 (MLKAAGQNAP…TNALLLSRAA (73 aa)).

The protein belongs to the heat shock protein 90 family. In terms of assembly, homodimer.

It localises to the cytoplasm. Its function is as follows. Molecular chaperone. Has ATPase activity. This is Chaperone protein HtpG from Burkholderia cenocepacia (strain HI2424).